The primary structure comprises 1241 residues: Interphotoreceptor matrix proteoglycan 2 (1241 aa).

An N-terminal signal peptide occupies residues 1–22 (MIMFPLFGKISLGILIFVLIEG). The Extracellular portion of the chain corresponds to 23-1099 (DFPSLTAQTY…KHCEEFVSEP (1077 aa)). N-linked (GlcNAc...) asparagine glycosylation occurs at asparagine 154. The disordered stretch occupies residues 180–223 (ELSSPVPVGDTSTLGDTTLSVPHPEVDAYEGASESSLERPEESI). Positions 189 to 199 (DTSTLGDTTLS) are enriched in polar residues. Threonine 190 and threonine 192 each carry an O-linked (GalNAc...) threonine glycan. One can recognise an SEA 1 domain in the interval 239–353 (GEQIAEFSIH…KPTVVYTISN (115 aa)). Residues 259 to 267 (QDSSSFHHQ) form a hyaluronan-binding motif involved in chondroitin sulfate A-binding region. 3 N-linked (GlcNAc...) asparagine glycosylation sites follow: asparagine 301, asparagine 320, and asparagine 370. 2 O-linked (GalNAc...) threonine glycosylation sites follow: threonine 544 and threonine 556. The segment covering 660–678 (QISKHSKYEHDDRSTHFPE) has biased composition (basic and acidic residues). Positions 660–684 (QISKHSKYEHDDRSTHFPEEEPLSG) are disordered. The region spanning 897–1010 (GALVVFFSLR…YSLDVESGDE (114 aa)) is the SEA 2 domain. N-linked (GlcNAc...) asparagine glycosylation is found at asparagine 942 and asparagine 956. EGF-like domains lie at 1010 to 1051 (EANP…RPCQ) and 1052 to 1093 (SLCD…KHCE). Disulfide bonds link cysteine 1014–cysteine 1025, cysteine 1019–cysteine 1036, cysteine 1038–cysteine 1050, cysteine 1054–cysteine 1067, cysteine 1061–cysteine 1077, and cysteine 1079–cysteine 1092. Residues 1080–1088 (RVGENWWYR) form a hyaluronan-binding motif involved in chondroitin sulfate C-binding region. The chain crosses the membrane as a helical span at residues 1100 to 1120 (VIIGITIASVVGLLVIFSAII). At 1121–1241 (YFFIRTLQAH…FVREQQVEEV (121 aa)) the chain is on the cytoplasmic side. The interval 1125–1133 (RTLQAHHDR) is hyaluronan-binding motif involved in chondroitin sulfate A- and C-binding. Residues 1136–1145 (RESPFSGSSR) form a hyaluronan-binding motif involved in chondroitin sulfate C-binding region. Positions 1210–1218 (REEIQERMR) are hyaluronan-binding motif involved in chondroitin sulfate A- and C-binding motif.

In terms of processing, highly glycosylated (N- and O-linked carbohydrates). Expressed in the retina (at protein level). Expressed by photoreceptors of the interphotoreceptor matrix (IPM) surrounding both rods and cones (at protein level). IPM occupies the subretinal space between the apices of the retinal pigment epithelium and the neural retina. Expressed in the pineal gland (at protein level).

The protein localises to the photoreceptor outer segment membrane. It localises to the photoreceptor inner segment membrane. It is found in the secreted. Its subcellular location is the extracellular space. The protein resides in the extracellular matrix. The protein localises to the interphotoreceptor matrix. Chondroitin sulfate- and hyaluronan-binding proteoglycan involved in the organization of interphotoreceptor matrix; may participate in the maturation and maintenance of the light-sensitive photoreceptor outer segment. Binds heparin. This chain is Interphotoreceptor matrix proteoglycan 2 (IMPG2), found in Homo sapiens (Human).